The primary structure comprises 446 residues: tRNA-2-methylthio-N(6)-dimethylallyladenosine synthase (446 aa).

The MTTase N-terminal domain occupies 5-121 (RRFYIQTFGC…LPSLIDDAAS (117 aa)). [4Fe-4S] cluster-binding residues include C14, C50, C84, C157, C161, and C164. The Radical SAM core domain occupies 143 to 373 (REGRISAFIP…IDLQQEISAE (231 aa)). The TRAM domain maps to 376-439 (RRQVGTVAEV…SATLSGSREG (64 aa)).

It belongs to the methylthiotransferase family. MiaB subfamily. In terms of assembly, monomer. It depends on [4Fe-4S] cluster as a cofactor.

It is found in the cytoplasm. The catalysed reaction is N(6)-dimethylallyladenosine(37) in tRNA + (sulfur carrier)-SH + AH2 + 2 S-adenosyl-L-methionine = 2-methylsulfanyl-N(6)-dimethylallyladenosine(37) in tRNA + (sulfur carrier)-H + 5'-deoxyadenosine + L-methionine + A + S-adenosyl-L-homocysteine + 2 H(+). Catalyzes the methylthiolation of N6-(dimethylallyl)adenosine (i(6)A), leading to the formation of 2-methylthio-N6-(dimethylallyl)adenosine (ms(2)i(6)A) at position 37 in tRNAs that read codons beginning with uridine. In Chlorobium luteolum (strain DSM 273 / BCRC 81028 / 2530) (Pelodictyon luteolum), this protein is tRNA-2-methylthio-N(6)-dimethylallyladenosine synthase.